Reading from the N-terminus, the 223-residue chain is Urease accessory protein UreF (223 aa).

Belongs to the UreF family. In terms of assembly, ureD, UreF and UreG form a complex that acts as a GTP-hydrolysis-dependent molecular chaperone, activating the urease apoprotein by helping to assemble the nickel containing metallocenter of UreC. The UreE protein probably delivers the nickel.

It localises to the cytoplasm. Functionally, required for maturation of urease via the functional incorporation of the urease nickel metallocenter. The protein is Urease accessory protein UreF of Sinorhizobium medicae (strain WSM419) (Ensifer medicae).